A 121-amino-acid chain; its full sequence is Large ribosomal subunit protein bL12 (121 aa).

Belongs to the bacterial ribosomal protein bL12 family. In terms of assembly, homodimer. Part of the ribosomal stalk of the 50S ribosomal subunit. Forms a multimeric L10(L12)X complex, where L10 forms an elongated spine to which 2 to 4 L12 dimers bind in a sequential fashion. Binds GTP-bound translation factors.

Its function is as follows. Forms part of the ribosomal stalk which helps the ribosome interact with GTP-bound translation factors. Is thus essential for accurate translation. This Proteus mirabilis (strain HI4320) protein is Large ribosomal subunit protein bL12.